A 224-amino-acid polypeptide reads, in one-letter code: Ribonuclease HII (224 aa).

The RNase H type-2 domain occupies 1–219 (MMIAGIDEAG…VENIREELKK (219 aa)). 3 residues coordinate a divalent metal cation: Asp7, Glu8, and Asp105.

It belongs to the RNase HII family. Mn(2+) is required as a cofactor. It depends on Mg(2+) as a cofactor.

Its subcellular location is the cytoplasm. It catalyses the reaction Endonucleolytic cleavage to 5'-phosphomonoester.. Its function is as follows. Endonuclease that specifically degrades the RNA of RNA-DNA hybrids. The chain is Ribonuclease HII from Methanosarcina barkeri (strain Fusaro / DSM 804).